A 261-amino-acid chain; its full sequence is uncharacterized protein (261 aa).

Residues Ile-33, Lys-60, Asp-78, and Asn-105 each contribute to the NADP(+) site. Ser-157 functions as the Proton donor in the catalytic mechanism. NADP(+) is bound by residues Tyr-172, Lys-176, and Thr-206. The active-site Proton acceptor is the Tyr-172. Lys-176 (lowers pKa of active site Tyr) is an active-site residue.

It belongs to the short-chain dehydrogenases/reductases (SDR) family.

It is found in the cytoplasm. The protein localises to the nucleus. This is an uncharacterized protein from Schizosaccharomyces pombe (strain 972 / ATCC 24843) (Fission yeast).